We begin with the raw amino-acid sequence, 45 residues long: Photosystem II reaction center protein K (45 aa).

Positions Met-1–Ala-8 are excised as a propeptide. The helical transmembrane segment at Ile-23–Gly-43 threads the bilayer.

This sequence belongs to the PsbK family. In terms of assembly, PSII is composed of 1 copy each of membrane proteins PsbA, PsbB, PsbC, PsbD, PsbE, PsbF, PsbH, PsbI, PsbJ, PsbK, PsbL, PsbM, PsbT, PsbX, PsbY, PsbZ, Psb30/Ycf12, at least 3 peripheral proteins of the oxygen-evolving complex and a large number of cofactors. It forms dimeric complexes.

The protein resides in the plastid. Its subcellular location is the chloroplast thylakoid membrane. In terms of biological role, one of the components of the core complex of photosystem II (PSII). PSII is a light-driven water:plastoquinone oxidoreductase that uses light energy to abstract electrons from H(2)O, generating O(2) and a proton gradient subsequently used for ATP formation. It consists of a core antenna complex that captures photons, and an electron transfer chain that converts photonic excitation into a charge separation. The protein is Photosystem II reaction center protein K of Porphyra purpurea (Red seaweed).